The chain runs to 84 residues: Small ribosomal subunit protein eS27 (84 aa).

A compositionally biased stretch (basic and acidic residues) spans 1 to 16 (MPLAKDPLHPSPEEEK). The interval 1-25 (MPLAKDPLHPSPEEEKRKHKKKRLV) is disordered. Residue serine 11 is modified to Phosphoserine. The segment at 38-60 (PGCYKITTVFSHAQTVVLCVGCS) adopts a C4-type zinc-finger fold.

The protein belongs to the eukaryotic ribosomal protein eS27 family. Component of the small ribosomal subunit. Part of the small subunit (SSU) processome, composed of more than 70 proteins and the RNA chaperone small nucleolar RNA (snoRNA) U3. The cofactor is Zn(2+).

The protein localises to the cytoplasm. It is found in the nucleus. Its subcellular location is the nucleolus. In terms of biological role, component of the small ribosomal subunit. The ribosome is a large ribonucleoprotein complex responsible for the synthesis of proteins in the cell. Required for proper rRNA processing and maturation of 18S rRNAs. Part of the small subunit (SSU) processome, first precursor of the small eukaryotic ribosomal subunit. During the assembly of the SSU processome in the nucleolus, many ribosome biogenesis factors, an RNA chaperone and ribosomal proteins associate with the nascent pre-rRNA and work in concert to generate RNA folding, modifications, rearrangements and cleavage as well as targeted degradation of pre-ribosomal RNA by the RNA exosome. This is Small ribosomal subunit protein eS27 (RPS27) from Pongo abelii (Sumatran orangutan).